The sequence spans 321 residues: Torsin-2A (321 aa).

A signal peptide spans 1–26 (MAAATRGCRPWGSLLGLLGLVSAAAA). 93-100 (GWTGTGKS) is an ATP binding site. N-linked (GlcNAc...) asparagine glycosylation occurs at Asn-149.

Belongs to the ClpA/ClpB family. Torsin subfamily. Homohexamer. Interacts with TOR1AIP1. In terms of tissue distribution, isoform 1 is expressed ubiquitously, except in cardiac and endothelial tissues.

It is found in the endoplasmic reticulum lumen. The chain is Torsin-2A (TOR2A) from Homo sapiens (Human).